The sequence spans 452 residues: Retinoid-inducible serine carboxypeptidase (452 aa).

A signal peptide spans 1–28 (MELSRRICLVRLWLLLLSFLLGFSAGSA). Residues N64, N102, and N126 are each glycosylated (N-linked (GlcNAc...) asparagine). S167 is a catalytic residue. N-linked (GlcNAc...) asparagine glycosylation is found at N192 and N362. Active-site residues include D371 and H431.

The protein belongs to the peptidase S10 family. In terms of tissue distribution, highly expressed in aorta, bladder, and kidney with much lower levels in all other tissues analyzed. Expression in kidney is restricted to proximal convoluted tubules.

It localises to the secreted. Its function is as follows. May be involved in vascular wall and kidney homeostasis. This is Retinoid-inducible serine carboxypeptidase (Scpep1) from Rattus norvegicus (Rat).